A 296-amino-acid chain; its full sequence is 4-hydroxybenzoate octaprenyltransferase (296 aa).

The next 8 membrane-spanning stretches (helical) occupy residues 28–48 (PIGI…AGKG), 52–72 (LKTV…GCVI), 102–122 (ALAL…FTNA), 146–166 (YYPQ…AFTA), 169–189 (GDLP…TVGY), 219–239 (VIIL…GARF), 241–261 (LGAC…WEFW), and 275–295 (FLHN…DYAV).

It belongs to the UbiA prenyltransferase family. It depends on Mg(2+) as a cofactor.

The protein resides in the cell inner membrane. It catalyses the reaction all-trans-octaprenyl diphosphate + 4-hydroxybenzoate = 4-hydroxy-3-(all-trans-octaprenyl)benzoate + diphosphate. It participates in cofactor biosynthesis; ubiquinone biosynthesis. Functionally, catalyzes the prenylation of para-hydroxybenzoate (PHB) with an all-trans polyprenyl group. Mediates the second step in the final reaction sequence of ubiquinone-8 (UQ-8) biosynthesis, which is the condensation of the polyisoprenoid side chain with PHB, generating the first membrane-bound Q intermediate 3-octaprenyl-4-hydroxybenzoate. In Pseudomonas savastanoi pv. phaseolicola (strain 1448A / Race 6) (Pseudomonas syringae pv. phaseolicola (strain 1448A / Race 6)), this protein is 4-hydroxybenzoate octaprenyltransferase.